Here is a 638-residue protein sequence, read N- to C-terminus: Phosphomethylpyrimidine synthase (638 aa).

Residues Asn-235, Met-264, Tyr-293, His-329, 349-351 (SRG), 390-393 (DGLR), and Glu-429 each bind substrate. His-433 is a binding site for Zn(2+). Tyr-456 is a binding site for substrate. His-497 lines the Zn(2+) pocket. [4Fe-4S] cluster is bound by residues Cys-577, Cys-580, and Cys-585.

It belongs to the ThiC family. Homodimer. The cofactor is [4Fe-4S] cluster.

The catalysed reaction is 5-amino-1-(5-phospho-beta-D-ribosyl)imidazole + S-adenosyl-L-methionine = 4-amino-2-methyl-5-(phosphooxymethyl)pyrimidine + CO + 5'-deoxyadenosine + formate + L-methionine + 3 H(+). The protein operates within cofactor biosynthesis; thiamine diphosphate biosynthesis. In terms of biological role, catalyzes the synthesis of the hydroxymethylpyrimidine phosphate (HMP-P) moiety of thiamine from aminoimidazole ribotide (AIR) in a radical S-adenosyl-L-methionine (SAM)-dependent reaction. This chain is Phosphomethylpyrimidine synthase, found in Polaromonas naphthalenivorans (strain CJ2).